The following is a 501-amino-acid chain: Envelope glycoprotein C homolog (501 aa).

The signal sequence occupies residues 1–27; the sequence is MLTPRVLRALGWTGLFFLLLSPSNVLG. Residues 28 to 465 lie on the Virion surface side of the membrane; it reads ASLSRDLETP…DATPSARGTP (438 aa). N46 carries an N-linked (GlcNAc...) asparagine; by host glycan. Positions 53-87 are disordered; it reads PLTEVPHAPSTESVSTNSESTNEHTITETTGKNAY. Low complexity predominate over residues 62–72; it reads STESVSTNSES. Residues N91, N100, N120, N212, N354, N400, and N429 are each glycosylated (N-linked (GlcNAc...) asparagine; by host). The region spanning 258–356 is the Ig-like domain; that stretch reads PASVDVLAPP…GDMISTTNAT (99 aa). Residues 466 to 492 traverse the membrane as a helical segment; sequence MVITVTAVLGLAVILGMGIIMTALCLY. Over 493 to 501 the chain is Cytoplasmic; that stretch reads NSTRKNIRL.

This sequence belongs to the herpesviridae glycoprotein C family.

It localises to the secreted. It is found in the host cell membrane. Functionally, may play an immunoevasive role in the pathogenesis of Marek's disease. It is a candidate for causing the early-stage immunosuppression that occurs after MDHV infection. This Gallus gallus (Chicken) protein is Envelope glycoprotein C homolog (gC).